The primary structure comprises 80 residues: Putative membrane protein insertion efficiency factor (80 aa).

It belongs to the UPF0161 family.

Its subcellular location is the cell membrane. Could be involved in insertion of integral membrane proteins into the membrane. This chain is Putative membrane protein insertion efficiency factor, found in Shouchella clausii (strain KSM-K16) (Alkalihalobacillus clausii).